The chain runs to 514 residues: Adenylosuccinate synthetase 1, chloroplastic (514 aa).

The N-terminal 73 residues, Met-1–Lys-73, are a transit peptide targeting the chloroplast. GTP-binding positions include Gly-100 to Lys-106 and Gly-128 to Thr-130. The active-site Proton acceptor is the Asp-101. Residues Asp-101 and Gly-128 each coordinate Mg(2+). IMP is bound by residues Asp-101 to Lys-104, Asn-126 to His-129, Thr-218, Arg-232, Gln-312, Thr-327, and Arg-391. Residue His-129 is the Proton donor of the active site. A substrate-binding site is contributed by Thr-387 to Arg-393. GTP is bound by residues Arg-393, Lys-419–Asp-421, and Gly-502–Gly-504.

The protein belongs to the adenylosuccinate synthetase family. As to quaternary structure, homodimer. Requires Mg(2+) as cofactor.

It localises to the plastid. The protein resides in the chloroplast. The catalysed reaction is IMP + L-aspartate + GTP = N(6)-(1,2-dicarboxyethyl)-AMP + GDP + phosphate + 2 H(+). Its pathway is purine metabolism; AMP biosynthesis via de novo pathway; AMP from IMP: step 1/2. Plays an important role in the de novo pathway and in the salvage pathway of purine nucleotide biosynthesis. Catalyzes the first committed step in the biosynthesis of AMP from IMP. The chain is Adenylosuccinate synthetase 1, chloroplastic from Physcomitrium patens (Spreading-leaved earth moss).